Here is a 229-residue protein sequence, read N- to C-terminus: Ribonuclease 3 (229 aa).

The 132-residue stretch at 5–136 (LAELERALGI…VIGAIYLDQG (132 aa)) folds into the RNase III domain. Residue glutamate 49 participates in Mg(2+) binding. Aspartate 53 is a catalytic residue. Mg(2+) is bound by residues aspartate 122 and glutamate 125. Glutamate 125 is a catalytic residue. In terms of domain architecture, DRBM spans 161–229 (DPTTRLQEIV…AQAALADIDR (69 aa)).

This sequence belongs to the ribonuclease III family. Homodimer. Mg(2+) serves as cofactor.

Its subcellular location is the cytoplasm. It carries out the reaction Endonucleolytic cleavage to 5'-phosphomonoester.. Functionally, digests double-stranded RNA. Involved in the processing of primary rRNA transcript to yield the immediate precursors to the large and small rRNAs (23S and 16S). Processes some mRNAs, and tRNAs when they are encoded in the rRNA operon. Processes pre-crRNA and tracrRNA of type II CRISPR loci if present in the organism. This is Ribonuclease 3 from Chloroflexus aggregans (strain MD-66 / DSM 9485).